The primary structure comprises 505 residues: Catalase (505 aa).

The disordered stretch occupies residues methionine 1–alanine 25. Catalysis depends on residues histidine 56 and asparagine 129. Tyrosine 339 contributes to the heme binding site.

It belongs to the catalase family. In terms of assembly, homodimer. Heme is required as a cofactor.

The enzyme catalyses 2 H2O2 = O2 + 2 H2O. Functionally, decomposes hydrogen peroxide into water and oxygen; serves to protect cells from the toxic effects of hydrogen peroxide. This is Catalase (katA) from Staphylococcus warneri.